The chain runs to 433 residues: Glutamate-1-semialdehyde 2,1-aminomutase (433 aa).

Lysine 273 is modified (N6-(pyridoxal phosphate)lysine).

This sequence belongs to the class-III pyridoxal-phosphate-dependent aminotransferase family. HemL subfamily. In terms of assembly, homodimer. The cofactor is pyridoxal 5'-phosphate.

The protein resides in the cytoplasm. The enzyme catalyses (S)-4-amino-5-oxopentanoate = 5-aminolevulinate. It participates in porphyrin-containing compound metabolism; protoporphyrin-IX biosynthesis; 5-aminolevulinate from L-glutamyl-tRNA(Glu): step 2/2. It functions in the pathway porphyrin-containing compound metabolism; chlorophyll biosynthesis. The polypeptide is Glutamate-1-semialdehyde 2,1-aminomutase (Microcystis aeruginosa (strain NIES-843 / IAM M-2473)).